A 173-amino-acid chain; its full sequence is Insertion element IS150 protein InsJ (173 aa).

This sequence belongs to the IS150/IS1296 orfA family.

This is Insertion element IS150 protein InsJ (insJ) from Escherichia coli (strain K12).